The primary structure comprises 742 residues: 5-methyltetrahydropteroyltriglutamate--homocysteine methyltransferase (742 aa).

5-methyltetrahydropteroyltri-L-glutamate-binding positions include 18 to 21 (REWK) and Lys-112. L-homocysteine-binding positions include 420–422 (IGS) and Glu-473. L-methionine-binding positions include 420–422 (IGS) and Glu-473. Trp-550 is a binding site for 5-methyltetrahydropteroyltri-L-glutamate. Residue Asp-588 coordinates L-homocysteine. An L-methionine-binding site is contributed by Asp-588. A 5-methyltetrahydropteroyltri-L-glutamate-binding site is contributed by Glu-594. Residues His-630, Cys-632, and Glu-654 each contribute to the Zn(2+) site. The Proton donor role is filled by His-683. Cys-715 serves as a coordination point for Zn(2+).

The protein belongs to the vitamin-B12 independent methionine synthase family. Zn(2+) serves as cofactor.

The catalysed reaction is 5-methyltetrahydropteroyltri-L-glutamate + L-homocysteine = tetrahydropteroyltri-L-glutamate + L-methionine. Its pathway is amino-acid biosynthesis; L-methionine biosynthesis via de novo pathway; L-methionine from L-homocysteine (MetE route): step 1/1. Its function is as follows. Catalyzes the transfer of a methyl group from 5-methyltetrahydrofolate to homocysteine resulting in methionine formation. The chain is 5-methyltetrahydropteroyltriglutamate--homocysteine methyltransferase from Staphylococcus aureus (strain USA300).